A 358-amino-acid chain; its full sequence is Probable ABC transporter periplasmic-binding protein y4fP (358 aa).

Residues 1–46 (MRNVIKLTWSRRKRSASLDKGENIMKLAFAFATAAIVVAAAFPALA) form the signal peptide.

It belongs to the bacterial solute-binding protein 1 family.

It is found in the periplasm. Its function is as follows. Probably part of the binding-protein-dependent transport system y4fNOP. This chain is Probable ABC transporter periplasmic-binding protein y4fP, found in Sinorhizobium fredii (strain NBRC 101917 / NGR234).